The following is a 243-amino-acid chain: CTD nuclear envelope phosphatase 1 homolog (243 aa).

A helical transmembrane segment spans residues 11 to 27; that stretch reads ALLLLLSKVWTCICFMF. The 168-residue stretch at 56–223 folds into the FCP1 homology domain; sequence SLVQRKTLVL…LSLLPMLDAL (168 aa).

It belongs to the dullard family.

It is found in the membrane. It carries out the reaction O-phospho-L-seryl-[protein] + H2O = L-seryl-[protein] + phosphate. The catalysed reaction is O-phospho-L-threonyl-[protein] + H2O = L-threonyl-[protein] + phosphate. Its function is as follows. Serine/threonine protein phosphatase that may dephosphorylate and activate lipin-like phosphatases. Lipins are phosphatidate phosphatases that catalyze the conversion of phosphatidic acid to diacylglycerol and control the metabolism of fatty acids at different levels. May indirectly modulate the lipid composition of nuclear and/or endoplasmic reticulum membranes and be required for proper nuclear membrane morphology and/or dynamics. May also indirectly regulate the production of lipid droplets and triacylglycerol. The chain is CTD nuclear envelope phosphatase 1 homolog (Dd) from Drosophila melanogaster (Fruit fly).